A 344-amino-acid polypeptide reads, in one-letter code: Fructose-1,6-bisphosphatase class 1 (344 aa).

Residues E92, D115, L117, and D118 each contribute to the Mg(2+) site. Substrate is bound by residues D118–S121, N211, Y244, and K274. E280 serves as a coordination point for Mg(2+).

It belongs to the FBPase class 1 family. In terms of assembly, homotetramer. Mg(2+) is required as a cofactor.

The protein resides in the cytoplasm. The enzyme catalyses beta-D-fructose 1,6-bisphosphate + H2O = beta-D-fructose 6-phosphate + phosphate. It participates in carbohydrate biosynthesis; gluconeogenesis. The protein is Fructose-1,6-bisphosphatase class 1 of Aeromonas hydrophila subsp. hydrophila (strain ATCC 7966 / DSM 30187 / BCRC 13018 / CCUG 14551 / JCM 1027 / KCTC 2358 / NCIMB 9240 / NCTC 8049).